Here is a 418-residue protein sequence, read N- to C-terminus: UDP-N-acetylglucosamine 1-carboxyvinyltransferase (418 aa).

Residue 22–23 participates in phosphoenolpyruvate binding; it reads KN. Residue Arg91 coordinates UDP-N-acetyl-alpha-D-glucosamine. Residue Cys115 is the Proton donor of the active site. Cys115 carries the post-translational modification 2-(S-cysteinyl)pyruvic acid O-phosphothioketal. Residues 120–124, Asp305, and Ile327 each bind UDP-N-acetyl-alpha-D-glucosamine; that span reads RPVDL.

The protein belongs to the EPSP synthase family. MurA subfamily.

Its subcellular location is the cytoplasm. It carries out the reaction phosphoenolpyruvate + UDP-N-acetyl-alpha-D-glucosamine = UDP-N-acetyl-3-O-(1-carboxyvinyl)-alpha-D-glucosamine + phosphate. Its pathway is cell wall biogenesis; peptidoglycan biosynthesis. Its function is as follows. Cell wall formation. Adds enolpyruvyl to UDP-N-acetylglucosamine. The chain is UDP-N-acetylglucosamine 1-carboxyvinyltransferase from Wigglesworthia glossinidia brevipalpis.